The chain runs to 85 residues: U4-theraphotoxin-Hhn1w (85 aa).

Positions 1–22 (MKVTLIAILTCAAVLALHTTAA) are cleaved as a signal peptide. The propeptide occupies 23 to 48 (EELEAESQLMEVGMPDTELAAVDEER). 3 disulfides stabilise this stretch: Cys52–Cys66, Cys56–Cys77, and Cys71–Cys82.

It belongs to the neurotoxin 12 (Hwtx-2) family. 02 (Hwtx-2) subfamily. Expressed by the venom gland.

It localises to the secreted. Its function is as follows. Postsynaptic neurotoxin. This chain is U4-theraphotoxin-Hhn1w, found in Cyriopagopus hainanus (Chinese bird spider).